The following is a 424-amino-acid chain: CinA-like protein (424 aa).

This sequence belongs to the CinA family.

The chain is CinA-like protein from Shewanella denitrificans (strain OS217 / ATCC BAA-1090 / DSM 15013).